We begin with the raw amino-acid sequence, 346 residues long: N-acetyl-gamma-glutamyl-phosphate reductase (346 aa).

Cys150 is a catalytic residue.

This sequence belongs to the NAGSA dehydrogenase family. Type 1 subfamily.

The protein resides in the cytoplasm. It catalyses the reaction N-acetyl-L-glutamate 5-semialdehyde + phosphate + NADP(+) = N-acetyl-L-glutamyl 5-phosphate + NADPH + H(+). It functions in the pathway amino-acid biosynthesis; L-arginine biosynthesis; N(2)-acetyl-L-ornithine from L-glutamate: step 3/4. Catalyzes the NADPH-dependent reduction of N-acetyl-5-glutamyl phosphate to yield N-acetyl-L-glutamate 5-semialdehyde. The protein is N-acetyl-gamma-glutamyl-phosphate reductase of Lachnoclostridium phytofermentans (strain ATCC 700394 / DSM 18823 / ISDg) (Clostridium phytofermentans).